A 149-amino-acid polypeptide reads, in one-letter code: Calmodulin-like protein 3 (149 aa).

4 EF-hand domains span residues 8–43 (EQIA…LGQN), 44–79 (PTEA…KMKD), 81–116 (DSEE…LGEK), and 117–149 (LSDE…LVSK). The Ca(2+) site is built by Asp21, Asp23, Asp25, Cys27, Glu32, Asp57, Asp59, Asn61, Thr63, Glu68, Asp94, Asp96, Asn98, Glu105, Asp130, Asp132, Asp134, Gln136, and Glu141.

It belongs to the calmodulin family. In terms of assembly, interacts with MYO10, the interaction is calcium-dependent and essential for MYO10 function in filopodial extension.

Its function is as follows. May function as a specific light chain of unconventional myosin-10 (MYO10), also enhances MYO10 translation, possibly by acting as a chaperone for the emerging MYO10 heavy chain protein. May compete with calmodulin by binding, with different affinities, to cellular substrates. The chain is Calmodulin-like protein 3 (Calml3) from Rattus norvegicus (Rat).